Reading from the N-terminus, the 143-residue chain is Endoribonuclease YbeY (143 aa).

Residues His111, His115, and Asp121 each contribute to the Zn(2+) site.

It belongs to the endoribonuclease YbeY family. Requires Zn(2+) as cofactor.

Its subcellular location is the cytoplasm. Its function is as follows. Single strand-specific metallo-endoribonuclease involved in late-stage 70S ribosome quality control and in maturation of the 3' terminus of the 16S rRNA. The chain is Endoribonuclease YbeY from Cytophaga hutchinsonii (strain ATCC 33406 / DSM 1761 / CIP 103989 / NBRC 15051 / NCIMB 9469 / D465).